The following is a 466-amino-acid chain: Catalase ifgD (466 aa).

Residues 1-22 (MAPNYAKKCPVMGKAPSSGHSS) are disordered. The active site involves His48. Heme is bound at residue Tyr337.

It belongs to the catalase family. Requires heme as cofactor.

It functions in the pathway alkaloid biosynthesis; ergot alkaloid biosynthesis. In terms of biological role, catalase; part of the gene cluster that mediates the biosynthesis of isofumigaclavines, fungal ergot alkaloids. The tryptophan dimethylallyltransferase ifgA catalyzes the first step of ergot alkaloid biosynthesis by condensing dimethylallyl diphosphate (DMAP) and tryptophan to form 4-dimethylallyl-L-tryptophan. The second step is catalyzed by the methyltransferase ifgB that methylates 4-dimethylallyl-L-tryptophan in the presence of S-adenosyl-L-methionine, resulting in the formation of N-methyl-dimethylallyl-L-tryptophan. The catalase ifgD and the FAD-dependent oxidoreductase ifgC then transform N-methyl-dimethylallyl-L-tryptophan to chanoclavine-I which is further oxidized by ifgE in the presence of NAD(+), resulting in the formation of chanoclavine-I aldehyde. The chanoclavine-I aldehyde reductases ifgG and/or fgaOx3 reduce chanoclavine-I aldehyde to dihydrochanoclavine-I aldehyde that spontaneously dehydrates to form 6,8-dimethyl-6,7-didehydroergoline. The festuclavine dehydrogenases ifgF1 and/or ifgF2 then catalyze the reduction of 6,8-dimethyl-6,7-didehydroergoline to form festuclavine. Hydrolysis of festuclavine by a yet undetermined cytochrome P450 monooxygenase (called ifgH) then leads to the formation of isofumigaclavine B which is in turn acetylated by ifgI to isofumigaclavine A. Penicillium roqueforti has interestingly at least two sets of genes for the consumption of chanoclavine-I aldehyde on three different loci, the OYEs ifgG/fgaOx3 and the festuclavine synthase homologs ifgF1/ifgF2. The reason for the duplication of these genes is unclear, probably to ensure the conversion of chanoclavine-I aldehyde by differential gene expression under various environmental conditions. This is Catalase ifgD from Penicillium roqueforti (strain FM164).